A 289-amino-acid polypeptide reads, in one-letter code: Pantothenate synthetase (289 aa).

30-37 contacts ATP; sequence MGYLHEGH. The Proton donor role is filled by H37. Position 61 (Q61) interacts with (R)-pantoate. Q61 is a beta-alanine binding site. 147–150 is an ATP binding site; that stretch reads GLKD. (R)-pantoate is bound at residue Q153. ATP-binding positions include V176 and 184 to 187; that span reads KSSR.

It belongs to the pantothenate synthetase family. In terms of assembly, homodimer.

It localises to the cytoplasm. It catalyses the reaction (R)-pantoate + beta-alanine + ATP = (R)-pantothenate + AMP + diphosphate + H(+). Its pathway is cofactor biosynthesis; (R)-pantothenate biosynthesis; (R)-pantothenate from (R)-pantoate and beta-alanine: step 1/1. In terms of biological role, catalyzes the condensation of pantoate with beta-alanine in an ATP-dependent reaction via a pantoyl-adenylate intermediate. The chain is Pantothenate synthetase from Geobacillus thermodenitrificans (strain NG80-2).